Reading from the N-terminus, the 197-residue chain is uncharacterized protein (197 aa).

Residues 150 to 172 traverse the membrane as a helical segment; that stretch reads SLKLNTTLPMFALNLICLLRSIL.

It localises to the membrane. This is an uncharacterized protein from Saccharomyces cerevisiae (strain ATCC 204508 / S288c) (Baker's yeast).